The chain runs to 604 residues: Elongation factor 4 (604 aa).

The tr-type G domain maps to 10-191; it reads KNIRNFSIIA…KIITTIPAPS (182 aa). GTP contacts are provided by residues 22–27 and 138–141; these read DHGKST and NKID.

This sequence belongs to the TRAFAC class translation factor GTPase superfamily. Classic translation factor GTPase family. LepA subfamily.

Its subcellular location is the cell inner membrane. The enzyme catalyses GTP + H2O = GDP + phosphate + H(+). In terms of biological role, required for accurate and efficient protein synthesis under certain stress conditions. May act as a fidelity factor of the translation reaction, by catalyzing a one-codon backward translocation of tRNAs on improperly translocated ribosomes. Back-translocation proceeds from a post-translocation (POST) complex to a pre-translocation (PRE) complex, thus giving elongation factor G a second chance to translocate the tRNAs correctly. Binds to ribosomes in a GTP-dependent manner. The sequence is that of Elongation factor 4 from Helicobacter pylori (strain J99 / ATCC 700824) (Campylobacter pylori J99).